The following is a 369-amino-acid chain: UDP-N-acetylglucosamine--N-acetylmuramyl-(pentapeptide) pyrophosphoryl-undecaprenol N-acetylglucosamine transferase (369 aa).

Residues T10–G12, N124, R166, S196, and Q300 contribute to the UDP-N-acetyl-alpha-D-glucosamine site.

This sequence belongs to the glycosyltransferase 28 family. MurG subfamily.

Its subcellular location is the cell membrane. The enzyme catalyses di-trans,octa-cis-undecaprenyl diphospho-N-acetyl-alpha-D-muramoyl-L-alanyl-D-glutamyl-meso-2,6-diaminopimeloyl-D-alanyl-D-alanine + UDP-N-acetyl-alpha-D-glucosamine = di-trans,octa-cis-undecaprenyl diphospho-[N-acetyl-alpha-D-glucosaminyl-(1-&gt;4)]-N-acetyl-alpha-D-muramoyl-L-alanyl-D-glutamyl-meso-2,6-diaminopimeloyl-D-alanyl-D-alanine + UDP + H(+). The protein operates within cell wall biogenesis; peptidoglycan biosynthesis. In terms of biological role, cell wall formation. Catalyzes the transfer of a GlcNAc subunit on undecaprenyl-pyrophosphoryl-MurNAc-pentapeptide (lipid intermediate I) to form undecaprenyl-pyrophosphoryl-MurNAc-(pentapeptide)GlcNAc (lipid intermediate II). The chain is UDP-N-acetylglucosamine--N-acetylmuramyl-(pentapeptide) pyrophosphoryl-undecaprenol N-acetylglucosamine transferase from Desulfitobacterium hafniense (strain Y51).